Consider the following 268-residue polypeptide: Hydroxyacylglutathione hydrolase (268 aa).

Zn(2+) is bound by residues H56, H58, D60, H61, H112, D137, and H176. 176–178 serves as a coordination point for substrate; the sequence is HEY.

This sequence belongs to the metallo-beta-lactamase superfamily. Glyoxalase II family. Monomer. Zn(2+) is required as a cofactor.

The catalysed reaction is an S-(2-hydroxyacyl)glutathione + H2O = a 2-hydroxy carboxylate + glutathione + H(+). The protein operates within secondary metabolite metabolism; methylglyoxal degradation; (R)-lactate from methylglyoxal: step 2/2. Thiolesterase that catalyzes the hydrolysis of S-D-lactoyl-glutathione to form glutathione and D-lactic acid. The protein is Hydroxyacylglutathione hydrolase (hagh) of Dictyostelium discoideum (Social amoeba).